We begin with the raw amino-acid sequence, 195 residues long: HTH-type transcriptional regulator BetI (195 aa).

Positions 8–68 (EIRRAQLIDA…ATMRHVLRDL (61 aa)) constitute an HTH tetR-type domain. A DNA-binding region (H-T-H motif) is located at residues 31 to 50 (TLASVAQRASISTGIVSHYF).

It participates in amine and polyamine biosynthesis; betaine biosynthesis via choline pathway [regulation]. In terms of biological role, repressor involved in the biosynthesis of the osmoprotectant glycine betaine. It represses transcription of the choline transporter BetT and the genes of BetAB involved in the synthesis of glycine betaine. The chain is HTH-type transcriptional regulator BetI from Paraburkholderia xenovorans (strain LB400).